A 296-amino-acid chain; its full sequence is Calponin-2 (296 aa).

An N-acetylserine modification is found at S2. Residues K8 and K25 each carry the N6-acetyllysine modification. The region spanning 28–132 (PQKEAELRSW…SLLALAGKAK (105 aa)) is the Calponin-homology (CH) domain. S138 carries the phosphoserine modification. Calponin-like repeat units lie at residues 166–191 (IGLQMGTNKCASQSGMTAYGTRRHLY), 206–231 (ISLQMGTNKCASQVGMTAPGTRRHIY), and 245–269 (MSLQMGYTQGANQSGQVFGLGRQIY). Positions 275–296 (PQGPAADGAPAAAGDCPGPGES) are disordered.

It belongs to the calponin family. Smooth muscle, and tissues containing significant amounts of smooth muscle.

Its function is as follows. Thin filament-associated protein that is implicated in the regulation and modulation of smooth muscle contraction. It is capable of binding to actin, calmodulin and tropomyosin. The interaction of calponin with actin inhibits the actomyosin Mg-ATPase activity. This chain is Calponin-2 (CNN2), found in Sus scrofa (Pig).